Reading from the N-terminus, the 275-residue chain is Large ribosomal subunit protein uL2 (275 aa).

The segment at 208–275 is disordered; it reads AGAKRWRGRR…NMIIRDRRKK (68 aa). Composition is skewed to basic residues over residues 209-219 and 254-263; these read GAKRWRGRRPT and KGYKTRRNKR.

It belongs to the universal ribosomal protein uL2 family. As to quaternary structure, part of the 50S ribosomal subunit. Forms a bridge to the 30S subunit in the 70S ribosome.

Its function is as follows. One of the primary rRNA binding proteins. Required for association of the 30S and 50S subunits to form the 70S ribosome, for tRNA binding and peptide bond formation. It has been suggested to have peptidyltransferase activity; this is somewhat controversial. Makes several contacts with the 16S rRNA in the 70S ribosome. The polypeptide is Large ribosomal subunit protein uL2 (Coxiella burnetii (strain CbuK_Q154) (Coxiella burnetii (strain Q154))).